Here is a 426-residue protein sequence, read N- to C-terminus: 3',5'-cyclic-nucleotide phosphodiesterase (426 aa).

The disordered stretch occupies residues 210-229; it reads DKEDAQHHSNSNSNSNNIWG.

This sequence belongs to the cyclic nucleotide phosphodiesterase class-II family.

The catalysed reaction is a nucleoside 3',5'-cyclic phosphate + H2O = a nucleoside 5'-phosphate + H(+). The polypeptide is 3',5'-cyclic-nucleotide phosphodiesterase (PDE1) (Candida albicans (Yeast)).